The following is a 294-amino-acid chain: Protease HtpX homolog 2 (294 aa).

2 consecutive transmembrane segments (helical) span residues 15 to 35 and 36 to 56; these read MLFT…FLSY and YGTS…AQYF. His-140 lines the Zn(2+) pocket. Glu-141 is a catalytic residue. His-144 contacts Zn(2+). 2 helical membrane passes run 151-171 and 185-205; these read AVLT…RYSL and GGIM…FLLI. Glu-213 contacts Zn(2+).

This sequence belongs to the peptidase M48B family. The cofactor is Zn(2+).

The protein localises to the cell membrane. This is Protease HtpX homolog 2 from Methanosarcina mazei (strain ATCC BAA-159 / DSM 3647 / Goe1 / Go1 / JCM 11833 / OCM 88) (Methanosarcina frisia).